A 410-amino-acid polypeptide reads, in one-letter code: Squalene synthase 1 (410 aa).

An N-acetylglycine modification is found at glycine 2. The next 2 helical transmembrane spans lie at 283-303 (SIFR…ALCY) and 387-407 (QPNS…FAYL).

This sequence belongs to the phytoene/squalene synthase family. Requires Mg(2+) as cofactor. The cofactor is Mn(2+). As to expression, expressed in all tissues analyzed (seedlings, cotyledons, inflorescences, siliques, leaves, stems and roots). Highly expressed in roots and pollen.

The protein resides in the endoplasmic reticulum membrane. It carries out the reaction 2 (2E,6E)-farnesyl diphosphate + NADPH + H(+) = squalene + 2 diphosphate + NADP(+). It catalyses the reaction 2 (2E,6E)-farnesyl diphosphate + NADH + H(+) = squalene + 2 diphosphate + NAD(+). Its pathway is terpene metabolism; lanosterol biosynthesis; lanosterol from farnesyl diphosphate: step 1/3. The polypeptide is Squalene synthase 1 (Arabidopsis thaliana (Mouse-ear cress)).